The primary structure comprises 115 residues: Large ribosomal subunit protein bL19 (115 aa).

Belongs to the bacterial ribosomal protein bL19 family.

Its function is as follows. This protein is located at the 30S-50S ribosomal subunit interface and may play a role in the structure and function of the aminoacyl-tRNA binding site. This Sodalis glossinidius (strain morsitans) protein is Large ribosomal subunit protein bL19.